We begin with the raw amino-acid sequence, 359 residues long: Small ribosomal subunit biogenesis GTPase RsgA (359 aa).

A CP-type G domain is found at 101–259 (KRKGSQAIAS…LMDNPGIREV (159 aa)). Residues 149–152 (NKKD) and 201–209 (GSSGAGKST) each bind GTP. 4 residues coordinate Zn(2+): Cys284, Cys289, His291, and Cys297. The disordered stretch occupies residues 331–359 (DPEEARKKKQKDKQMSKALQKRLKDKGRK). The span at 349 to 359 (LQKRLKDKGRK) shows a compositional bias: basic residues.

This sequence belongs to the TRAFAC class YlqF/YawG GTPase family. RsgA subfamily. As to quaternary structure, monomer. Associates with 30S ribosomal subunit, binds 16S rRNA. Zn(2+) is required as a cofactor.

Its subcellular location is the cytoplasm. Functionally, one of several proteins that assist in the late maturation steps of the functional core of the 30S ribosomal subunit. Helps release RbfA from mature subunits. May play a role in the assembly of ribosomal proteins into the subunit. Circularly permuted GTPase that catalyzes slow GTP hydrolysis, GTPase activity is stimulated by the 30S ribosomal subunit. In Leptospira interrogans serogroup Icterohaemorrhagiae serovar copenhageni (strain Fiocruz L1-130), this protein is Small ribosomal subunit biogenesis GTPase RsgA.